The sequence spans 591 residues: Nuclear receptor subfamily 4 group A member 2 (591 aa).

Disordered stretches follow at residues 1–22 (MPCVQAQYGSSPQGASPASQSY) and 110–133 (SEEMMSHSGSVYYKPSSPPTSSTP). The segment covering 8 to 22 (YGSSPQGASPASQSY) has biased composition (low complexity). The segment at residues 253–328 (EGLCAVCGDN…VGMVKEVVRT (76 aa)) is a DNA-binding region (nuclear receptor). NR C4-type zinc fingers lie at residues 256-276 (CAVCGDNAACQHYGVRTCEGC) and 292-311 (CLANKNCPVDKRRRNRCQYC). A Bipartite nuclear localization signal (NLS1) motif is present at residues 280–307 (FKRTVQKNAKYVCLANKNCPVDKRRRNR). Residues 330-354 (SLKGRRGRLPSKPKSPQEPSPPSPP) form a disordered region. Residues 331 to 343 (LKGRRGRLPSKPK) carry the Nuclear localization signal (NLS1) motif. A compositionally biased stretch (pro residues) spans 345–354 (PQEPSPPSPP). Residues 353-588 (PPVSLISALV…AIIDKLFLDT (236 aa)) form the NR LBD domain. The short motif at 436 to 445 (FLELFVLRLA) is the nuclear export sequence (NES1) element. A nuclear export sequence (NES2) motif is present at residues 561 to 570 (QGLQRIFYLK).

Belongs to the nuclear hormone receptor family.

The protein resides in the cytoplasm. It localises to the nucleus. In terms of biological role, transcriptional regulator which may play a role in the differentiation and maintenance of meso-diencephalic dopaminergic (mdDA) neurons. The polypeptide is Nuclear receptor subfamily 4 group A member 2 (nr4a2) (Xenopus tropicalis (Western clawed frog)).